A 256-amino-acid polypeptide reads, in one-letter code: Transmembrane protein 74B (256 aa).

The tract at residues 1 to 111 is disordered; it reads MPPAQGYEFA…LSLHSEEGPA (111 aa). Low complexity predominate over residues 80-96; sequence RLGSSPSPPGGVSSLPR. Positions 97 to 108 are enriched in basic and acidic residues; sequence SQRDDLSLHSEE. A run of 2 helical transmembrane segments spans residues 123–143 and 177–197; these read FVSA…AYAI and IIAG…LLMV.

Belongs to the TMEM74 family.

Its subcellular location is the membrane. This is Transmembrane protein 74B (TMEM74B) from Homo sapiens (Human).